Consider the following 199-residue polypeptide: N-(5'-phosphoribosyl)anthranilate isomerase (199 aa).

The protein belongs to the TrpF family.

The catalysed reaction is N-(5-phospho-beta-D-ribosyl)anthranilate = 1-(2-carboxyphenylamino)-1-deoxy-D-ribulose 5-phosphate. Its pathway is amino-acid biosynthesis; L-tryptophan biosynthesis; L-tryptophan from chorismate: step 3/5. In Sulfolobus acidocaldarius (strain ATCC 33909 / DSM 639 / JCM 8929 / NBRC 15157 / NCIMB 11770), this protein is N-(5'-phosphoribosyl)anthranilate isomerase.